Here is a 271-residue protein sequence, read N- to C-terminus: Aquaporin-2 (271 aa).

At 1–11 the chain is on the cytoplasmic side; that stretch reads MWELRSIAFSR. Residues 12 to 32 traverse the membrane as a helical segment; that stretch reads AVLAEFLATLLFVFFGLGSAL. The Extracellular segment spans residues 33-40; sequence QWASSPPS. The helical transmembrane segment at 41–59 threads the bilayer; it reads VLQIAVAFGLGIGILVQAL. At 60–64 the chain is on the cytoplasmic side; that stretch reads GHVSG. Residues 65 to 74 constitute an intramembrane region (discontinuously helical); the sequence is AHINPAVTVA. The NPA 1 motif lies at 68-70; sequence NPA. Over 75–85 the chain is Cytoplasmic; it reads CLVGCHVSFLR. A helical transmembrane segment spans residues 86–107; the sequence is AAFYVAAQLLGAVAGAAILHEI. Over 108–127 the chain is Extracellular; sequence TPVEIRGDLAVNALHNNATA. N-linked (GlcNAc...) asparagine glycosylation is present at Asn124. A helical transmembrane segment spans residues 128-148; the sequence is GQAVTVELFLTMQLVLCIFAS. Residues 149–156 are Cytoplasmic-facing; sequence TDERRGDN. The helical transmembrane segment at 157 to 176 threads the bilayer; sequence LGSPALSIGFSVTLGHLLGI. The Extracellular portion of the chain corresponds to 177-180; the sequence is YFTG. Residues 181-193 constitute an intramembrane region (discontinuously helical); sequence CSMNPARSLAPAV. The short motif at 184-186 is the NPA 2 element; it reads NPA. The Extracellular portion of the chain corresponds to 194-201; sequence VTGKFDDH. Residues 202-222 traverse the membrane as a helical segment; the sequence is WVFWIGPLVGAIIGSLLYNYL. Topologically, residues 223-271 are cytoplasmic; it reads LFPSAKSLQERLAVLKGLEPDTDWEEREVRRRQSVELHSPQSLPRGSKA. The disordered stretch occupies residues 251 to 271; that stretch reads VRRRQSVELHSPQSLPRGSKA. A phosphoserine mark is found at Ser256, Ser261, Ser264, and Ser269. The span at 261–271 shows a compositional bias: polar residues; that stretch reads SPQSLPRGSKA.

Belongs to the MIP/aquaporin (TC 1.A.8) family. As to quaternary structure, homotetramer. In terms of processing, ser-256 phosphorylation is necessary and sufficient for expression at the apical membrane. Endocytosis is not phosphorylation-dependent. N-glycosylated. In terms of tissue distribution, detected in kidney, in cortical and the medullary collecting tubules (at protein level). Detected in kidney medulla and cortex.

The protein localises to the apical cell membrane. It localises to the basolateral cell membrane. The protein resides in the cell membrane. It is found in the cytoplasmic vesicle membrane. Its subcellular location is the golgi apparatus. The protein localises to the trans-Golgi network membrane. It catalyses the reaction H2O(in) = H2O(out). It carries out the reaction glycerol(in) = glycerol(out). Its function is as follows. Forms a water-specific channel that provides the plasma membranes of renal collecting duct with high permeability to water, thereby permitting water to move in the direction of an osmotic gradient. Plays an essential role in renal water homeostasis. Could also be permeable to glycerol. The polypeptide is Aquaporin-2 (Rattus norvegicus (Rat)).